We begin with the raw amino-acid sequence, 189 residues long: MTKLLVGLGNPGDKYFETKHNVGFMLIDQLAKKQNVTFTHDKIFQADLASFFLNGEKIYLVKPTTFMNESGKAVHALLTYYGLDIDDLLIIYDDLDMEVGKIRLRAKGSAGGHNGIKSIIQHIGTQVFNRVKIGIGRPKNGMSVVHHVLSKFDRDEYIGILQSVDKVDDSVNYYLQEKNFEKTMQRYNG.

Tyr15 provides a ligand contact to tRNA. His20 acts as the Proton acceptor in catalysis. Residues Phe66, Asn68, and Asn114 each coordinate tRNA.

This sequence belongs to the PTH family. As to quaternary structure, monomer.

It localises to the cytoplasm. It catalyses the reaction an N-acyl-L-alpha-aminoacyl-tRNA + H2O = an N-acyl-L-amino acid + a tRNA + H(+). In terms of biological role, hydrolyzes ribosome-free peptidyl-tRNAs (with 1 or more amino acids incorporated), which drop off the ribosome during protein synthesis, or as a result of ribosome stalling. Its function is as follows. Catalyzes the release of premature peptidyl moieties from peptidyl-tRNA molecules trapped in stalled 50S ribosomal subunits, and thus maintains levels of free tRNAs and 50S ribosomes. The sequence is that of Peptidyl-tRNA hydrolase from Streptococcus pneumoniae (strain Taiwan19F-14).